A 743-amino-acid polypeptide reads, in one-letter code: Probable TonB-dependent receptor BfrD (743 aa).

Residues 1–30 (MKFYSSHPMPESLAAAIAVPLLGLLPAAQA) form the signal peptide. Positions 62–168 (PLADTPRTVQ…AGGSINLVTK (107 aa)) constitute a TBDR plug domain. The region spanning 173–743 (QDFTEVQAGI…SAMLTFKLSY (571 aa)) is the TBDR beta-barrel domain. A TonB C-terminal box motif is present at residues 726 to 743 (YAALGPGRSAMLTFKLSY).

The protein belongs to the TonB-dependent receptor family.

The protein resides in the cell outer membrane. Functionally, probably involved in iron transport. This chain is Probable TonB-dependent receptor BfrD (bfrD), found in Bordetella pertussis (strain Tohama I / ATCC BAA-589 / NCTC 13251).